The following is a 96-amino-acid chain: Co-chaperonin GroES (96 aa).

The protein belongs to the GroES chaperonin family. Heptamer of 7 subunits arranged in a ring. Interacts with the chaperonin GroEL.

It localises to the cytoplasm. Together with the chaperonin GroEL, plays an essential role in assisting protein folding. The GroEL-GroES system forms a nano-cage that allows encapsulation of the non-native substrate proteins and provides a physical environment optimized to promote and accelerate protein folding. GroES binds to the apical surface of the GroEL ring, thereby capping the opening of the GroEL channel. In Vibrio campbellii (strain ATCC BAA-1116), this protein is Co-chaperonin GroES.